A 590-amino-acid chain; its full sequence is Aspartate--tRNA(Asp/Asn) ligase (590 aa).

An L-aspartate-binding site is contributed by E170. Residues Q194–K197 form an aspartate region. R216 contributes to the L-aspartate binding site. ATP-binding positions include R216–E218 and Q225. H448 is an L-aspartate binding site. E482 is a binding site for ATP. Residue R489 coordinates L-aspartate. Residue G534–R537 participates in ATP binding. Positions S557 to E590 are disordered. The span at Q575 to E590 shows a compositional bias: basic and acidic residues.

The protein belongs to the class-II aminoacyl-tRNA synthetase family. Type 1 subfamily. In terms of assembly, homodimer.

It is found in the cytoplasm. The enzyme catalyses tRNA(Asx) + L-aspartate + ATP = L-aspartyl-tRNA(Asx) + AMP + diphosphate. Its function is as follows. Aspartyl-tRNA synthetase with relaxed tRNA specificity since it is able to aspartylate not only its cognate tRNA(Asp) but also tRNA(Asn). Reaction proceeds in two steps: L-aspartate is first activated by ATP to form Asp-AMP and then transferred to the acceptor end of tRNA(Asp/Asn). The sequence is that of Aspartate--tRNA(Asp/Asn) ligase from Mycobacterium sp. (strain KMS).